We begin with the raw amino-acid sequence, 176 residues long: NAD(P)H-quinone oxidoreductase subunit 6, chloroplastic (176 aa).

The next 5 helical transmembrane spans lie at 10 to 30, 33 to 53, 60 to 80, 95 to 115, and 152 to 172; these read ILML…VLLT, IYSA…YFLL, VAQL…AVMF, IGDG…MTTI, and FYLP…GAIT.

This sequence belongs to the complex I subunit 6 family. As to quaternary structure, NDH is composed of at least 16 different subunits, 5 of which are encoded in the nucleus.

It is found in the plastid. It localises to the chloroplast thylakoid membrane. It carries out the reaction a plastoquinone + NADH + (n+1) H(+)(in) = a plastoquinol + NAD(+) + n H(+)(out). It catalyses the reaction a plastoquinone + NADPH + (n+1) H(+)(in) = a plastoquinol + NADP(+) + n H(+)(out). Its function is as follows. NDH shuttles electrons from NAD(P)H:plastoquinone, via FMN and iron-sulfur (Fe-S) centers, to quinones in the photosynthetic chain and possibly in a chloroplast respiratory chain. The immediate electron acceptor for the enzyme in this species is believed to be plastoquinone. Couples the redox reaction to proton translocation, and thus conserves the redox energy in a proton gradient. The sequence is that of NAD(P)H-quinone oxidoreductase subunit 6, chloroplastic (ndhG) from Lolium perenne (Perennial ryegrass).